Consider the following 584-residue polypeptide: MTQEGRIIKIAGPVIIAEGMRGSQMYEMVKVGEDKLIGEIIELEGDTATIQVYEETAGIKPGETVERTGGPLSVELGPGILGSIFDGIQRPLENIKALTGDYIERGVDVPSLPKDKKWTFKPTAREGQMVKGGDIIGEVEETSSITHRIMIPPNVEGKLTMIAPQGEYTVLDDIAEVETESGTEKIQMLQKWPVRKGRPYKKKLDPDVPLVTGQRAQDTFFSVAKGGTAAIPGPFGSGKTVTQQQLAKWADADIIVYVGCGERGNEMTEVLKEFPELEDPKTGNPLMDRTVLIANTSNMPVAAREACVYTGITIAEYFRDMGYDVALMADSTSRWAEAMREISGRLEEMPGEEGYPAYLASRLAQFYERAGRVTTIGSEDKIASVSVVGAVSPPGGDLSEPVTQNTLRICKVFWALDASLADKRHFPSIDWLQSYSLYIDSVQEWWASNVDPEWRKFRDEAMALLQKEAELQEIVQLVGPDALPDRERITLETTRMIREDFLQQNAYHEVDTYCSPSKQFEMLRTIIMFHRNATAALEKGAPAADIISLPVKEDIGRMKYIPEEEFPARIKEIQERIVKECSEV.

233–240 lines the ATP pocket; it reads GPFGSGKT.

It belongs to the ATPase alpha/beta chains family. Has multiple subunits with at least A(3), B(3), C, D, E, F, H, I and proteolipid K(x).

Its subcellular location is the cell membrane. The enzyme catalyses ATP + H2O + 4 H(+)(in) = ADP + phosphate + 5 H(+)(out). Its function is as follows. Component of the A-type ATP synthase that produces ATP from ADP in the presence of a proton gradient across the membrane. The A chain is the catalytic subunit. This Methanothermobacter thermautotrophicus (strain ATCC 29096 / DSM 1053 / JCM 10044 / NBRC 100330 / Delta H) (Methanobacterium thermoautotrophicum) protein is A-type ATP synthase subunit A.